Here is a 121-residue protein sequence, read N- to C-terminus: Large ribosomal subunit protein eL34B (121 aa).

The protein belongs to the eukaryotic ribosomal protein eL34 family. In terms of assembly, component of the large ribosomal subunit (LSU). Mature yeast ribosomes consist of a small (40S) and a large (60S) subunit. The 40S small subunit contains 1 molecule of ribosomal RNA (18S rRNA) and 33 different proteins (encoded by 57 genes). The large 60S subunit contains 3 rRNA molecules (25S, 5.8S and 5S rRNA) and 46 different proteins (encoded by 81 genes).

The protein localises to the cytoplasm. Component of the ribosome, a large ribonucleoprotein complex responsible for the synthesis of proteins in the cell. The small ribosomal subunit (SSU) binds messenger RNAs (mRNAs) and translates the encoded message by selecting cognate aminoacyl-transfer RNA (tRNA) molecules. The large subunit (LSU) contains the ribosomal catalytic site termed the peptidyl transferase center (PTC), which catalyzes the formation of peptide bonds, thereby polymerizing the amino acids delivered by tRNAs into a polypeptide chain. The nascent polypeptides leave the ribosome through a tunnel in the LSU and interact with protein factors that function in enzymatic processing, targeting, and the membrane insertion of nascent chains at the exit of the ribosomal tunnel. This is Large ribosomal subunit protein eL34B from Saccharomyces cerevisiae (strain ATCC 204508 / S288c) (Baker's yeast).